Here is a 293-residue protein sequence, read N- to C-terminus: Protein orai (293 aa).

Over Met1–Thr122 the chain is Cytoplasmic. The interval Ser62–Ser81 is disordered. A helical transmembrane segment spans residues Ser123–Gln141. At Ser142–Pro146 the chain is on the extracellular side. Residues Leu147–Met167 form a helical membrane-spanning segment. Residues Met168–Trp198 are Cytoplasmic-facing. The helical transmembrane segment at Leu199 to Val219 threads the bilayer. The Extracellular segment spans residues Lys220 to Gly230. The chain crosses the membrane as a helical span at residues Tyr231–Ile251. The Cytoplasmic segment spans residues His252 to Ile293.

The protein belongs to the Orai family. Expressed in gonad sheath cells, hypodermis, intestine and spermatheca. Coexpressed with stim-1.

The protein localises to the membrane. Ca(2+) release-activated Ca(2+)-like (CRAC-like) channel subunit which mediates Ca(2+) influx and increase in Ca(2+)-selective current by synergy with the Ca(2+) sensor, stim-1. Required for Ca(2+) and IP3-dependent contractile activity of sheath cells and the spermatheca. Affects brood size and somatic cell function. In Caenorhabditis elegans, this protein is Protein orai (orai-1).